The chain runs to 94 residues: Co-chaperonin GroES (94 aa).

Belongs to the GroES chaperonin family. Heptamer of 7 subunits arranged in a ring. Interacts with the chaperonin GroEL.

The protein resides in the cytoplasm. In terms of biological role, together with the chaperonin GroEL, plays an essential role in assisting protein folding. The GroEL-GroES system forms a nano-cage that allows encapsulation of the non-native substrate proteins and provides a physical environment optimized to promote and accelerate protein folding. GroES binds to the apical surface of the GroEL ring, thereby capping the opening of the GroEL channel. This Bacillus cereus (strain ATCC 14579 / DSM 31 / CCUG 7414 / JCM 2152 / NBRC 15305 / NCIMB 9373 / NCTC 2599 / NRRL B-3711) protein is Co-chaperonin GroES.